Reading from the N-terminus, the 90-residue chain is HssA/B-like protein 4 (90 aa).

The protein belongs to the hssA/B family.

In Dictyostelium discoideum (Social amoeba), this protein is HssA/B-like protein 4 (hssl4).